The chain runs to 376 residues: Erythronate-4-phosphate dehydrogenase (376 aa).

Residues S45 and T67 each coordinate substrate. Residue D147 coordinates NAD(+). Residue R209 is part of the active site. Residue D233 participates in NAD(+) binding. Residue E238 is part of the active site. H255 acts as the Proton donor in catalysis. G258 contributes to the NAD(+) binding site. Residue Y259 coordinates substrate.

The protein belongs to the D-isomer specific 2-hydroxyacid dehydrogenase family. PdxB subfamily. Homodimer.

The protein localises to the cytoplasm. It carries out the reaction 4-phospho-D-erythronate + NAD(+) = (R)-3-hydroxy-2-oxo-4-phosphooxybutanoate + NADH + H(+). It participates in cofactor biosynthesis; pyridoxine 5'-phosphate biosynthesis; pyridoxine 5'-phosphate from D-erythrose 4-phosphate: step 2/5. Its function is as follows. Catalyzes the oxidation of erythronate-4-phosphate to 3-hydroxy-2-oxo-4-phosphonooxybutanoate. The sequence is that of Erythronate-4-phosphate dehydrogenase from Shewanella baltica (strain OS185).